The chain runs to 530 residues: uncharacterized protein (530 aa).

This is an uncharacterized protein from Acanthamoeba polyphaga (Amoeba).